We begin with the raw amino-acid sequence, 56 residues long: Large ribosomal subunit protein bL32 (56 aa).

Belongs to the bacterial ribosomal protein bL32 family.

This is Large ribosomal subunit protein bL32 from Prochlorococcus marinus (strain MIT 9215).